A 441-amino-acid polypeptide reads, in one-letter code: Tol-Pal system protein TolB (441 aa).

A signal peptide spans 1–39; the sequence is MPTMTPAFSRASLSEALRSYGLALLLFLATLLAWQPAHA.

This sequence belongs to the TolB family. As to quaternary structure, the Tol-Pal system is composed of five core proteins: the inner membrane proteins TolA, TolQ and TolR, the periplasmic protein TolB and the outer membrane protein Pal. They form a network linking the inner and outer membranes and the peptidoglycan layer.

It is found in the periplasm. Part of the Tol-Pal system, which plays a role in outer membrane invagination during cell division and is important for maintaining outer membrane integrity. In Bordetella avium (strain 197N), this protein is Tol-Pal system protein TolB.